Here is a 225-residue protein sequence, read N- to C-terminus: Helicostatins (225 aa).

The signal sequence occupies residues 1-18 (MLYSSLPVCFLVLGAALC). Positions 19–48 (APERMQNEAEPHDLQPHEAEPHSDHVAPLA) are excised as a propeptide. 3 positions are modified to leucine amide: Leu58, Leu79, and Leu90. The propeptide occupies 94–127 (SVDEDQSNDEQQLTTSDLDQAALAELFDQYDDAE). Leu137 is subject to Leucine amide. A propeptide spanning residues 141–149 (FADDETSEE) is cleaved from the precursor. Leucine amide occurs at positions 159, 170, 181, 192, and 206. Residues 205 to 225 (GLGKRSGDDVSADDSDNYFDV) are disordered. The propeptide occupies 210-225 (SGDDVSADDSDNYFDV). A compositionally biased stretch (acidic residues) spans 214-225 (VSADDSDNYFDV).

Belongs to the allatostatin family. In terms of tissue distribution, highly expressed in the CNS and gut of larvae. Also expressed in the cells of the larval brain and ventral nerve cord and in endocrine cells of the midgut.

It is found in the secreted. Its function is as follows. May act as a neurotransmitter or neuromodulator. This is Helicostatins from Helicoverpa armigera (Cotton bollworm).